The sequence spans 679 residues: Glycine--tRNA ligase beta subunit (679 aa).

This sequence belongs to the class-II aminoacyl-tRNA synthetase family. As to quaternary structure, tetramer of two alpha and two beta subunits.

The protein resides in the cytoplasm. The catalysed reaction is tRNA(Gly) + glycine + ATP = glycyl-tRNA(Gly) + AMP + diphosphate. The protein is Glycine--tRNA ligase beta subunit of Streptococcus pyogenes serotype M4 (strain MGAS10750).